The following is a 6629-amino-acid chain: Replicase polyprotein 1ab (6629 aa).

The Cytoplasmic segment spans residues 1–1750 (MASSLKQGVS…VASYKTVLCK (1750 aa)). The Ubiquitin-like 1 domain maps to 675 to 780 (KTVTFGETTV…SCHLIYRDYE (106 aa)). The disordered stretch occupies residues 783 to 802 (DDIEEEDAEECDTDSGEAEE). The Macro domain occupies 1003–1179 (VKPATCEKPK…YFDVTCKQKT (177 aa)). Positions 1175 to 1227 (CKQKTIYLTEDGVKYRSIVLKPGDSLGQFGQVYAKNKIVFTADDVEDKEILYV) constitute a Ubiquitin-like 2 domain. The Peptidase C16 domain occupies 1236–1497 (EYYGLDAQKY…SKSVKEDVSN (262 aa)). The For PL-PRO activity role is filled by cysteine 1274. Positions 1353, 1355, 1387, and 1390 each coordinate Zn(2+). The C4-type; degenerate zinc finger occupies 1353–1390 (CNCGIKSYELRGLEACIQPVRATNLLHFKTQYSNCPTC). Active-site for PL-PRO activity residues include histidine 1437 and aspartate 1448. A helical transmembrane segment spans residues 1751 to 1771 (VVLATLLIVWFVYTSNPVMFT). The segment at 1751–1864 (VVLATLLIVW…KPVAGFVIIC (114 aa)) is HD1. The 65-residue stretch at 1769–1833 (MFTGIRVLDF…AYSVEQVYKD (65 aa)) folds into the 3Ecto domain. At 1772–1843 (GIRVLDFLFE…AASGFIFNWN (72 aa)) the chain is on the lumenal side. Disulfide bonds link cysteine 1785/cysteine 1811 and cysteine 1802/cysteine 1808. A helical membrane pass occupies residues 1844-1864 (WLYLVFLILFVKPVAGFVIIC). Over 1865–2280 (YCVKYLVLNS…TFKCFKSYFK (416 aa)) the chain is Cytoplasmic. Residues 1911 to 2001 (YIQVHHILYC…KLKRHVKPTA (91 aa)) form a Y1 region. The 353-residue stretch at 1911–2263 (YIQVHHILYC…HTQKLLVEKK (353 aa)) folds into the CoV Nsp3 Y domain. Zn(2+) is bound by residues histidine 1915, cysteine 1920, cysteine 1925, cysteine 1928, cysteine 1961, histidine 1964, cysteine 1968, and cysteine 1971. Positions 1915 to 1928 (HHILYCKDVTCEVC) are ZF1. A ZF2 region spans residues 1961–1971 (CKRHNWYCRNC). The interval 2002–2104 (YAYHVVDEAC…ILDQALYEQL (103 aa)) is Y2. The segment at 2002–2263 (YAYHVVDEAC…HTQKLLVEKK (262 aa)) is coV-Y. The tract at residues 2105–2163 (VVEPVSKSVIDKVCSILSSIISVDTAALNYKAGTLRDALLSITKDEEAVDMAIFCHNHD) is Y3. The Y4 stretch occupies residues 2164–2263 (VDYTGDGFTN…HTQKLLVEKK (100 aa)). The chain crosses the membrane as a helical span at residues 2281 to 2301 (WLLIFYILFTACCSGYYYMEV). The tract at residues 2281 to 2664 (WLLIFYILFT…LACCYLGFII (384 aa)) is HD2. Topologically, residues 2302–2559 (SKSFVHPMYD…FFTGVNPNIY (258 aa)) are lumenal. Residues 2560-2580 (MQLATMFLILVVVVLIFAMVI) traverse the membrane as a helical segment. Topologically, residues 2581 to 2611 (KFQGVFKAYATTVFITMLVWVINAFILCVHS) are cytoplasmic. A helical membrane pass occupies residues 2612 to 2632 (YNSVLAVILLVLYCYASLVTS). Topologically, residues 2633-2643 (RNTVIIMHCWL) are lumenal. The chain crosses the membrane as a helical span at residues 2644 to 2664 (VFTFGLIVPTWLACCYLGFII). The Cytoplasmic portion of the chain corresponds to 2665-3096 (YMYTPLFLWC…SSFVRKATSW (432 aa)). Residues 2684 to 2779 (LYDGNEFVGN…RYSIGVSRLQ (96 aa)) enclose the Nsp4C domain. The Peptidase C30 domain occupies 2780 to 3086 (SGFKKLVSPS…FNQIGGVRLQ (307 aa)). Residues histidine 2820 and cysteine 2922 each act as for 3CL-PRO activity in the active site. The helical transmembrane segment at 3097–3117 (FWSRCVLACFLFVLCAIVLFT) threads the bilayer. Residues 3097-3317 (FWSRCVLACF…WLCTCYFGLY (221 aa)) are HD3. The Lumenal segment spans residues 3118-3121 (AVPL). Residues 3122 to 3142 (KFYVYAAVILLMAVLFISFTV) form a helical membrane-spanning segment. Over 3143 to 3151 (KHVMAYMDT) the chain is Cytoplasmic. The helical transmembrane segment at 3152–3172 (FLLPTLITVIIGVCAEVPFIY) threads the bilayer. Over 3173–3188 (NTLISQVVIFLSQWYD) the chain is Lumenal. Residues 3189–3209 (PVVFDTMVPWMFLPLVLYTAF) traverse the membrane as a helical segment. The Cytoplasmic segment spans residues 3210-3257 (KCVQGCYMNSFNTSLLMLYQFVKLGFVIYTSSNTLTAYTEGNWELFFE). The helical transmembrane segment at 3258-3278 (LVHTTVLANVSSNSLIGLFVF) threads the bilayer. The Lumenal segment spans residues 3279 to 3296 (KCAKWMLYYCNATYLNNY). The chain crosses the membrane as a helical span at residues 3297–3317 (VLMAVMVNCIGWLCTCYFGLY). Topologically, residues 3318-6629 (WWVNKVFGLT…FTSDSFVCTM (3312 aa)) are cytoplasmic. A RdRp Nsp7 cofactor domain is found at 3380 to 3462 (AKLSDVKCTT…DILKRSTVLQ (83 aa)). One can recognise a RdRp Nsp8 cofactor domain in the interval 3463-3672 (SVTQEFSHIP…GHNKVDVVLQ (210 aa)). The 111-residue stretch at 3673 to 3783 (NNELMPHGVK…GAISNVVVLQ (111 aa)) folds into the Nsp9 ssRNA-binding domain. In terms of domain architecture, ExoN/MTase coactivator spans 3785–3926 (KGHETEEVDA…CDSLRQPKSS (142 aa)). Zn(2+) is bound by residues cysteine 3858, cysteine 3861, histidine 3867, cysteine 3878, cysteine 3904, cysteine 3907, cysteine 3915, and cysteine 3917. 2 zinc fingers span residues 3858–3878 (CLYC…DGRC) and 3904–3917 (CTVC…GCQC). In terms of domain architecture, NiRAN spans 3940 to 4198 (YLNRVRGSSE…APERYFEYDV (259 aa)). The 99-residue stretch at 4203-4301 (KSYDLLKYDY…MNQDNTMSFS (99 aa)) folds into the Nsp12 Interface domain. 5 residues coordinate Zn(2+): histidine 4232, cysteine 4238, cysteine 4243, cysteine 4247, and cysteine 4424. A Nsp12 RNA-dependent RNA polymerase domain is found at 4302-4868 (KMGLSQLMQF…NMYRAPTTLQ (567 aa)). The interval 4304 to 4517 (GLSQLMQFVG…HQKILKSIVN (214 aa)) is rdRp Fingers N-ter. The rdRp Palm N-ter stretch occupies residues 4518–4556 (TRNASVVIGTTKFYGGWDNMLRNLIQGVEDPILMGWDYP). The RdRp catalytic domain maps to 4548 to 4710 (PILMGWDYPK…CYNNTLAKQG (163 aa)). The rdRp Fingers C-ter stretch occupies residues 4557–4615 (KCDRAMPNLLRIAASLVLARKHTNCCSWSERIYRLYNECAQVLSETVLATGGIYVKPGG). Zn(2+) contacts are provided by histidine 4578, cysteine 4581, and cysteine 4582. Positions 4616 to 4751 (TSSGDATTAY…EKGPHEFCSQ (136 aa)) are rdRp Palm C-ter. Active-site residues include serine 4695, aspartate 4696, and aspartate 4697. Residues 4752–4868 (HTMLVEVDGE…NMYRAPTTLQ (117 aa)) form a rdRp Thumb region. Residues 4869-4981 (SCGVCVVCNS…DDFNQLATTN (113 aa)) form the CV ZBD domain. Cysteine 4873, cysteine 4876, cysteine 4884, cysteine 4887, cysteine 4894, cysteine 4897, histidine 4901, histidine 4907, cysteine 4918, cysteine 4923, cysteine 4940, and histidine 4943 together coordinate Zn(2+). Residues 5125 to 5305 (MVPECFVNNI…MVCVKPDIFL (181 aa)) enclose the (+)RNA virus helicase ATP-binding domain. Residue 5150 to 5157 (GPPGSGKS) coordinates ATP. The region spanning 5306 to 5477 (AKCYRCPKEI…QGTGLFKICN (172 aa)) is the (+)RNA virus helicase C-terminal domain. Positions 5539 to 5753 (MFITRDEAIR…RCLAINNAFC (215 aa)) constitute an ExoN domain. Residues aspartate 5557, glutamate 5559, and glutamate 5658 contribute to the active site. Cysteine 5674, cysteine 5676, cysteine 5692, histidine 5695, histidine 5723, cysteine 5727, and histidine 5730 together coordinate Zn(2+). Residues histidine 5734 and aspartate 5739 contribute to the active site. Zn(2+) is bound at residue cysteine 5745. An N7-MTase domain is found at 5762 to 5989 (YPHIANEDEV…NLWKSFSALQ (228 aa)). Residue 5797–5803 (DIGNPKG) coordinates S-adenosyl-L-methionine. The tract at residues 5877-5891 (CNGGSLYVNKHAFYT) is gpppA-binding. Zn(2+) contacts are provided by cysteine 5915, cysteine 5935, cysteine 5946, and histidine 5949. In terms of domain architecture, Nsp15 N-terminal oligomerization spans 5990–6050 (SIDNIAYNMY…SVAFELYAKR (61 aa)). The AV-Nsp11N/CoV-Nsp15M domain maps to 6051–6166 (NIRTLPNNRI…VYKRVNGAFV (116 aa)). A NendoU domain is found at 6183–6324 (EPRSDIERDF…EDGSIKTCYP (142 aa)). Active-site residues include histidine 6212, histidine 6227, lysine 6267, lysine 6371, aspartate 6455, lysine 6499, and glutamate 6532. A Nidovirus-type SAM-dependent 2'-O-MTase domain is found at 6327–6626 (QSAWTCGYNM…NTSFTSDSFV (300 aa)).

This sequence belongs to the coronaviruses polyprotein 1ab family. In terms of assembly, interacts with host PHB and PHB2. As to quaternary structure, interacts with papain-like protease and non-structural protein 6. Monomer. Homodimer. Only the homodimer shows catalytic activity. In terms of assembly, eight copies of nsp7 and eight copies of nsp8 assemble to form a heterohexadecamer dsRNA-encircling ring structure. As to quaternary structure, eight copies of nsp7 and eight copies of nsp8 assemble to form a heterohexadecamer dsRNA-encircling ring structure. Interacts with ORF6 protein. Homodimer. In terms of assembly, homododecamer. Interacts with proofreading exoribonuclease nsp14 and 2'-O-methyltransferase nsp16; these interactions enhance nsp14 and nsp16 enzymatic activities. As to quaternary structure, interacts with host DDX1 (via C-terminus). Interacts with non-structural protein 10. Homohexamer. In terms of assembly, interacts with non-structural protein 10. Mn(2+) serves as cofactor. It depends on Zn(2+) as a cofactor. Specific enzymatic cleavages in vivo by its own proteases yield mature proteins. 3C-like proteinase nsp5 liberates nsps 6-16 from the polyprotein. Papain-like and 3C-like proteinases are autocatalytically processed. In terms of processing, N-glycosylated.

The protein localises to the host endoplasmic reticulum membrane. It is found in the host cytoplasm. Its subcellular location is the host perinuclear region. The protein resides in the host endoplasmic reticulum. It localises to the host endoplasmic reticulum-Golgi intermediate compartment. It carries out the reaction Thiol-dependent hydrolysis of ester, thioester, amide, peptide and isopeptide bonds formed by the C-terminal Gly of ubiquitin (a 76-residue protein attached to proteins as an intracellular targeting signal).. The catalysed reaction is RNA(n) + a ribonucleoside 5'-triphosphate = RNA(n+1) + diphosphate. The enzyme catalyses ATP + H2O = ADP + phosphate + H(+). It catalyses the reaction uridylyl-uridylyl-ribonucleotide-RNA = a 3'-end uridylyl-2',3'-cyclophospho-uridine-RNA + a 5'-end dephospho-ribonucleoside-RNA. It carries out the reaction a 5'-end diphospho-ribonucleoside in mRNA + GTP + H(+) = a 5'-end (5'-triphosphoguanosine)-ribonucleoside in mRNA + diphosphate. The catalysed reaction is a 5'-end (N(7)-methyl 5'-triphosphoguanosine)-ribonucleoside in mRNA + S-adenosyl-L-methionine = a 5'-end (N(7)-methyl 5'-triphosphoguanosine)-(2'-O-methyl-ribonucleoside) in mRNA + S-adenosyl-L-homocysteine + H(+). Functionally, multifunctional protein involved in the transcription and replication of viral RNAs. Contains the proteinases responsible for the cleavages of the polyprotein. In terms of biological role, may play a role in the modulation of host cell survival signaling pathway by interacting with host PHB and PHB2. Indeed, these two proteins play a role in maintaining the functional integrity of the mitochondria and protecting cells from various stresses. Its function is as follows. Responsible for the cleavages located at the N-terminus of the replicase polyprotein. In addition, PL-PRO possesses a deubiquitinating/deISGylating activity and processes both 'Lys-48'- and 'Lys-63'-linked polyubiquitin chains from cellular substrates. Plays a role in host membrane rearrangement that leads to creation of cytoplasmic double-membrane vesicles (DMV) necessary for viral replication. Alone is able to induce paired membranes. Coexpression of nsp3 and nsp4 does not result in the formation of DMVs. Functionally, responsible for the majority of cleavages as it cleaves the C-terminus of replicase polyprotein at 11 sites. Recognizes substrates containing the core sequence [ILMVF]-Q-|-[SGACN]. Inhibited by the substrate-analog Cbz-Val-Asn-Ser-Thr-Leu-Gln-CMK. In terms of biological role, forms a hexadecamer with nsp8 (8 subunits of each) that may participate in viral replication by acting as a primase. Alternatively, may synthesize substantially longer products than oligonucleotide primers. Its function is as follows. Forms a hexadecamer with nsp7 (8 subunits of each) that may participate in viral replication by acting as a primase. Alternatively, may synthesize substantially longer products than oligonucleotide primers. Forms a primer, NSP9-pU, which is utilized by the polymerase for the initiation of RNA chains. Interacts with ribosome signal recognition particle RNA (SRP). Together with NSP8, suppress protein integration into the cell membrane, thereby disrupting host immune defenses. Functionally, plays a pivotal role in viral transcription by stimulating both nsp14 3'-5' exoribonuclease and nsp16 2'-O-methyltransferase activities. Therefore plays an essential role in viral mRNAs cap methylation. In terms of biological role, RNA-directed RNA polymerase that catalyzes the transcription of viral genomic and subgenomic RNAs. Acts in complex with nsp7 and nsp8 to transcribe both the minus and positive strands of genomic RNA. The kinase-like NiRAN domain of NSP12 attaches one or more nucleotides to the amino terminus of NSP9, forming a covalent RNA-protein intermediate that serves as transcription/replication primer. Subgenomic RNAs (sgRNAs) are formed by discontinuous transcription: The polymerase has the ability to pause at transcription-regulating sequences (TRS) and jump to the leader TRS, resulting in a major deletion. This creates a series of subgenomic RNAs that are replicated, transcribed and translated. In addition, Nsp12 is a subunit of the viral RNA capping enzyme that catalyzes the RNA guanylyltransferase reaction for genomic and sub-genomic RNAs. Subsequently, the NiRAN domain transfers RNA to GDP, and forms the core cap structure GpppA-RNA. Its function is as follows. Multi-functional protein with a zinc-binding domain in N-terminus displaying RNA and DNA duplex-unwinding activities with 5' to 3' polarity. Activity of helicase is dependent on magnesium. Enzyme possessing two different activities: an exoribonuclease activity acting on both ssRNA and dsRNA in a 3' to 5' direction and a N7-guanine methyltransferase activity. Acts as a proofreading exoribonuclease for RNA replication, thereby lowering The sensitivity of the virus to RNA mutagens. Functionally, plays a role in viral transcription/replication and prevents the simultaneous activation of host cell dsRNA sensors, such as MDA5/IFIH1, OAS, and PKR. Acts by degrading the 5'-polyuridines generated during replication of the poly(A) region of viral genomic and subgenomic RNAs. Catalyzes a two-step reaction in which a 2'3'-cyclic phosphate (2'3'-cP) is first generated by 2'-O transesterification, which is then hydrolyzed to a 3'-phosphate (3'-P). If not degraded, poly(U) RNA would hybridize with poly(A) RNA tails and activate host dsRNA sensors. In terms of biological role, methyltransferase that mediates mRNA cap 2'-O-ribose methylation to the 5'-cap structure of viral mRNAs. N7-methyl guanosine cap is a prerequisite for binding of nsp16. Therefore plays an essential role in viral mRNAs cap methylation which is essential to evade immune system. The protein is Replicase polyprotein 1ab (rep) of Gallus gallus (Chicken).